A 101-amino-acid polypeptide reads, in one-letter code: Small ribosomal subunit protein uS14A (101 aa).

The protein belongs to the universal ribosomal protein uS14 family. Part of the 30S ribosomal subunit. Contacts proteins S3 and S10.

Binds 16S rRNA, required for the assembly of 30S particles and may also be responsible for determining the conformation of the 16S rRNA at the A site. This is Small ribosomal subunit protein uS14A from Salinispora tropica (strain ATCC BAA-916 / DSM 44818 / JCM 13857 / NBRC 105044 / CNB-440).